The following is a 348-amino-acid chain: Rhodopsin (348 aa).

N-acetylmethionine is present on methionine 1. Topologically, residues 1–36 (MNGTEGPNFYVPFSNKTGVVRSPFEYPQYYLAEPWQ) are extracellular. 2 N-linked (GlcNAc...) asparagine glycosylation sites follow: asparagine 2 and asparagine 15. A helical membrane pass occupies residues 37–61 (FSMLAAYMFLLIVLGFPINFLTLYV). Residues 62–73 (TVQHKKLRTPLN) are Cytoplasmic-facing. The helical transmembrane segment at 74-96 (YILLNLAVADLFMVFGGFTTTLY) threads the bilayer. Over 97–110 (TSLHGYFVFGPTGC) the chain is Extracellular. A disulfide bridge links cysteine 110 with cysteine 187. The chain crosses the membrane as a helical span at residues 111–133 (NLEGFFATLGGEIALWSLVVLAI). Positions 134-136 (ERY) match the 'Ionic lock' involved in activated form stabilization motif. At 134–152 (ERYVVVCKPMSNFRFGENH) the chain is on the cytoplasmic side. A helical transmembrane segment spans residues 153–173 (AIMGVGLTWVMALACAAPPLV). At 174-202 (GWSRYIPEGMQCSCGIDYYTLKPEVNNES) the chain is on the extracellular side. Glutamate 201 contributes to the Zn(2+) binding site. Residues 203-224 (FVIYMFVVHFTIPMIVIFFCYG) traverse the membrane as a helical segment. Over 225–252 (QLVFTVKEAAAQQQESATTQKAEKEVTR) the chain is Cytoplasmic. A helical transmembrane segment spans residues 253-274 (MVIIMVIAFLICWVPYASVAFY). Topologically, residues 275–286 (IFTHQGFNFGPI) are extracellular. A Zn(2+)-binding site is contributed by glutamine 279. A helical membrane pass occupies residues 287-308 (FMTLPAFFAKAAAIYNPVIYIM). Position 296 is an N6-(retinylidene)lysine (lysine 296). The Cytoplasmic portion of the chain corresponds to 309 to 348 (MNKQFRTCMITTLCCGKNPLGDDEVSASASKTETSQVAPA). Residues cysteine 322 and cysteine 323 are each lipidated (S-palmitoyl cysteine). Residues 330–348 (DDEVSASASKTETSQVAPA) are interaction with SAG. 2 positions are modified to phosphoserine: serine 334 and serine 338. A phosphothreonine mark is found at threonine 340 and threonine 342. Position 343 is a phosphoserine (serine 343).

This sequence belongs to the G-protein coupled receptor 1 family. Opsin subfamily. In terms of assembly, homodimer. Interacts (phosphorylated form) with SAG. Interacts with GNAT1. Interacts with GNAT3. SAG and G-proteins compete for a common binding site. Interacts with GRK1. Interacts with PRCD; the interaction promotes PRCD stability. Forms a complex with ASAP1 and ARF4. Forms a complex with ASAP1, RAB11A, Rabin8/RAB3IP, ARF4 and RAB11FIP3; the complex regulates Golgi-to-cilia rhodopsin/RHO transport in photoreceptors. Post-translationally, phosphorylated on some or all of the serine and threonine residues present in the C-terminal region. In terms of processing, contains one covalently linked retinal chromophore. Upon light absorption, the covalently bound 11-cis-retinal is converted to all-trans-retinal. After hydrolysis of the Schiff base and release of the covalently bound all-trans-retinal, active rhodopsin is regenerated by binding of a fresh molecule of 11-cis-retinal.

Its subcellular location is the membrane. The protein resides in the cell projection. It localises to the cilium. The protein localises to the photoreceptor outer segment. Its function is as follows. Photoreceptor required for image-forming vision at low light intensity. Required for photoreceptor cell viability after birth. Light-induced isomerization of 11-cis to all-trans retinal triggers a conformational change that activates signaling via G-proteins. Subsequent receptor phosphorylation mediates displacement of the bound G-protein alpha subunit by the arrestin SAG and terminates signaling. The protein is Rhodopsin (RHO) of Pagophilus groenlandicus (Harp seal).